The sequence spans 113 residues: UPF0122 protein SSU98_0878 (113 aa).

It belongs to the UPF0122 family.

In terms of biological role, might take part in the signal recognition particle (SRP) pathway. This is inferred from the conservation of its genetic proximity to ftsY/ffh. May be a regulatory protein. The polypeptide is UPF0122 protein SSU98_0878 (Streptococcus suis (strain 98HAH33)).